The sequence spans 450 residues: UDP-N-acetylmuramoylalanine--D-glutamate ligase (450 aa).

An ATP-binding site is contributed by 112–118; sequence GSNGKTT.

This sequence belongs to the MurCDEF family.

The protein localises to the cytoplasm. The catalysed reaction is UDP-N-acetyl-alpha-D-muramoyl-L-alanine + D-glutamate + ATP = UDP-N-acetyl-alpha-D-muramoyl-L-alanyl-D-glutamate + ADP + phosphate + H(+). It participates in cell wall biogenesis; peptidoglycan biosynthesis. Its function is as follows. Cell wall formation. Catalyzes the addition of glutamate to the nucleotide precursor UDP-N-acetylmuramoyl-L-alanine (UMA). In Cytophaga hutchinsonii (strain ATCC 33406 / DSM 1761 / CIP 103989 / NBRC 15051 / NCIMB 9469 / D465), this protein is UDP-N-acetylmuramoylalanine--D-glutamate ligase.